We begin with the raw amino-acid sequence, 192 residues long: LOB domain-containing protein 32 (192 aa).

The region spanning 4–105 is the LOB domain; the sequence is NRCAVCKILN…QDIESAVNEL (102 aa).

It belongs to the LOB domain-containing protein family.

The protein is LOB domain-containing protein 32 (LBD32) of Arabidopsis thaliana (Mouse-ear cress).